Reading from the N-terminus, the 560-residue chain is Chaperonin GroEL 2 (560 aa).

Residues 29–32, 86–90, glycine 413, and aspartate 492 contribute to the ATP site; these read TIGP and DGTTT. The interval 520-542 is disordered; it reads DKPEPPSAPGAEGGDPMGGMGGM. Residues 530–542 are compositionally biased toward gly residues; it reads AEGGDPMGGMGGM.

Belongs to the chaperonin (HSP60) family. Forms a cylinder of 14 subunits composed of two heptameric rings stacked back-to-back. Interacts with the co-chaperonin GroES.

The protein localises to the cytoplasm. It catalyses the reaction ATP + H2O + a folded polypeptide = ADP + phosphate + an unfolded polypeptide.. In terms of biological role, together with its co-chaperonin GroES, plays an essential role in assisting protein folding. The GroEL-GroES system forms a nano-cage that allows encapsulation of the non-native substrate proteins and provides a physical environment optimized to promote and accelerate protein folding. The protein is Chaperonin GroEL 2 of Prochlorococcus marinus (strain NATL2A).